Here is a 492-residue protein sequence, read N- to C-terminus: Ribose import ATP-binding protein RbsA (492 aa).

ABC transporter domains are found at residues 3–239 (IDMR…VGRK) and 238–492 (RKLE…TGGK). 35-42 (GENGAGKS) is a binding site for ATP.

The protein belongs to the ABC transporter superfamily. Ribose importer (TC 3.A.1.2.1) family. In terms of assembly, the complex is composed of an ATP-binding protein (RbsA), two transmembrane proteins (RbsC) and a solute-binding protein (RbsB).

It is found in the cell membrane. The catalysed reaction is D-ribose(out) + ATP + H2O = D-ribose(in) + ADP + phosphate + H(+). Its function is as follows. Part of the ABC transporter complex RbsABC involved in ribose import. Responsible for energy coupling to the transport system. This is Ribose import ATP-binding protein RbsA from Streptococcus agalactiae serotype V (strain ATCC BAA-611 / 2603 V/R).